A 392-amino-acid polypeptide reads, in one-letter code: Putative cystathionine gamma-lyase 2 (392 aa).

A disordered region spans residues 32–55; it reads LSSTYKQDNPGEPKGHDYSRAGNP. Over residues 40-50 the composition is skewed to basic and acidic residues; that stretch reads NPGEPKGHDYS. Residues Arg51, Tyr103, and Arg108 each contribute to the substrate site. Position 203 is an N6-(pyridoxal phosphate)lysine (Lys203). Residue Glu330 coordinates substrate.

This sequence belongs to the trans-sulfuration enzymes family. The cofactor is pyridoxal 5'-phosphate.

The protein resides in the cytoplasm. The catalysed reaction is L,L-cystathionine + H2O = 2-oxobutanoate + L-cysteine + NH4(+). It participates in amino-acid biosynthesis; L-cysteine biosynthesis; L-cysteine from L-homocysteine and L-serine: step 2/2. This Caenorhabditis elegans protein is Putative cystathionine gamma-lyase 2 (cth-2).